A 290-amino-acid polypeptide reads, in one-letter code: 33 kDa chaperonin (290 aa).

Cystine bridges form between Cys235-Cys237 and Cys268-Cys271.

Belongs to the HSP33 family. Post-translationally, under oxidizing conditions two disulfide bonds are formed involving the reactive cysteines. Under reducing conditions zinc is bound to the reactive cysteines and the protein is inactive.

Its subcellular location is the cytoplasm. Redox regulated molecular chaperone. Protects both thermally unfolding and oxidatively damaged proteins from irreversible aggregation. Plays an important role in the bacterial defense system toward oxidative stress. This is 33 kDa chaperonin from Streptococcus equi subsp. zooepidemicus (strain MGCS10565).